We begin with the raw amino-acid sequence, 353 residues long: Methylthioribose-1-phosphate isomerase (353 aa).

The active-site Proton donor is the Asp-241.

It belongs to the eIF-2B alpha/beta/delta subunits family. MtnA subfamily.

Its subcellular location is the cytoplasm. The protein localises to the nucleus. It carries out the reaction 5-(methylsulfanyl)-alpha-D-ribose 1-phosphate = 5-(methylsulfanyl)-D-ribulose 1-phosphate. The protein operates within amino-acid biosynthesis; L-methionine biosynthesis via salvage pathway; L-methionine from S-methyl-5-thio-alpha-D-ribose 1-phosphate: step 1/6. In terms of biological role, catalyzes the interconversion of methylthioribose-1-phosphate (MTR-1-P) into methylthioribulose-1-phosphate (MTRu-1-P). This Danio rerio (Zebrafish) protein is Methylthioribose-1-phosphate isomerase (mri1).